The following is a 311-amino-acid chain: Haloalkane dehalogenase (311 aa).

The region spanning 30–148 (AIVFQHGNPS…WDDFPDEVAQ (119 aa)) is the AB hydrolase-1 domain. Asp107 acts as the Nucleophile in catalysis. The active-site Proton donor is Glu131. The Proton acceptor role is filled by His272.

Belongs to the haloalkane dehalogenase family. Type 2 subfamily. In terms of assembly, monomer.

The catalysed reaction is 1-haloalkane + H2O = a halide anion + a primary alcohol + H(+). Catalyzes hydrolytic cleavage of carbon-halogen bonds in halogenated aliphatic compounds, leading to the formation of the corresponding primary alcohols, halide ions and protons. This Mycolicibacterium smegmatis (strain ATCC 700084 / mc(2)155) (Mycobacterium smegmatis) protein is Haloalkane dehalogenase.